The sequence spans 338 residues: POU domain, class 4, transcription factor 3 (338 aa).

Positions 56–65 (RAEALAAVDI) match the POU-IV box motif. In terms of domain architecture, POU-specific spans 179–256 (DVESDPRELE…VLQAWLEEAE (78 aa)). Residues 274 to 333 (RKRKRTSIAAPEKRSLEAYFAIQPRPSSEKIAAIAEKLDLKKNVVRVWFCNQRQKQKRMK) constitute a DNA-binding region (homeobox).

Belongs to the POU transcription factor family. Class-4 subfamily. As to quaternary structure, interacts with ISL1. In terms of tissue distribution, brain.

The protein resides in the nucleus. It localises to the cytoplasm. In terms of biological role, acts as a transcriptional activator. Acts by binding to sequences related to the consensus octamer motif 5'-ATGCAAAT-3' in the regulatory regions of its target genes. Involved in the auditory system development, required for terminal differentiation of hair cells in the inner ear. The polypeptide is POU domain, class 4, transcription factor 3 (Mus musculus (Mouse)).